Consider the following 456-residue polypeptide: tRNA-2-methylthio-N(6)-dimethylallyladenosine synthase (456 aa).

Positions L19 to T136 constitute an MTTase N-terminal domain. The [4Fe-4S] cluster site is built by C28, C63, C97, C173, C177, and C180. One can recognise a Radical SAM core domain in the interval Q159 to K389. One can recognise a TRAM domain in the interval K392–E455.

Belongs to the methylthiotransferase family. MiaB subfamily. Monomer. The cofactor is [4Fe-4S] cluster.

Its subcellular location is the cytoplasm. It carries out the reaction N(6)-dimethylallyladenosine(37) in tRNA + (sulfur carrier)-SH + AH2 + 2 S-adenosyl-L-methionine = 2-methylsulfanyl-N(6)-dimethylallyladenosine(37) in tRNA + (sulfur carrier)-H + 5'-deoxyadenosine + L-methionine + A + S-adenosyl-L-homocysteine + 2 H(+). Catalyzes the methylthiolation of N6-(dimethylallyl)adenosine (i(6)A), leading to the formation of 2-methylthio-N6-(dimethylallyl)adenosine (ms(2)i(6)A) at position 37 in tRNAs that read codons beginning with uridine. This is tRNA-2-methylthio-N(6)-dimethylallyladenosine synthase from Lachnoclostridium phytofermentans (strain ATCC 700394 / DSM 18823 / ISDg) (Clostridium phytofermentans).